Here is a 381-residue protein sequence, read N- to C-terminus: Arf-GAP with dual PH domain-containing protein 2 (381 aa).

The Arf-GAP domain maps to 9-132; sequence KRLLELLQAA…TAIDKAVSHP (124 aa). A C4-type zinc finger spans residues 25 to 48; that stretch reads CADCGAADPDWASYKLGIFICLHC. PH domains follow at residues 132 to 233 and 255 to 361; these read PGNR…AARL and NYLK…GVLS.

It is found in the cytoplasm. Its subcellular location is the cell membrane. Functionally, GTPase-activating protein for the ADP ribosylation factor family (Potential). Binds phosphatidylinositol 3,4,5-trisphosphate (PtdInsP3) and inositol 1,3,4,5-tetrakisphosphate (InsP4). Possesses a stoichiometry of two binding sites for InsP4 with identical affinity. This is Arf-GAP with dual PH domain-containing protein 2 (Adap2) from Mus musculus (Mouse).